A 273-amino-acid chain; its full sequence is Homeobox protein HMX2 (273 aa).

The tract at residues 1-152 (MGSKEDAGKG…RQAGAAKKKT (152 aa)) is disordered. Residues 93-102 (KGSGGSGPGG) are compositionally biased toward gly residues. Residues 114–123 (SDFKEEKERL) show a composition bias toward basic and acidic residues. A DNA-binding region (homeobox) is located at residues 149–208 (KKKTRTVFSRSQVYQLESTFDMKRYLSSSERACLASSLQLTETQVKTWFQNRRNKWKRQL).

Belongs to the HMX homeobox family.

It localises to the nucleus. Transcription factor involved in specification of neuronal cell types and which is required for inner ear and hypothalamus development. The protein is Homeobox protein HMX2 (HMX2) of Homo sapiens (Human).